A 135-amino-acid chain; its full sequence is Congerin-1 (135 aa).

Ser-1 carries the post-translational modification N-acetylserine. In terms of domain architecture, Galectin spans 3–135 (GLQVKNFDFT…GDARLTLVKE (133 aa)). An a beta-D-galactoside-binding site is contributed by 70-76 (WETEQRS).

As to quaternary structure, homodimer.

This protein binds beta-galactoside. Its physiological function is not yet known. In Conger myriaster (Conger eel), this protein is Congerin-1.